Reading from the N-terminus, the 170-residue chain is Transcription factor E (170 aa).

Residues 1–93 (MKDVYLYIVE…TWYVNDEVIS (93 aa)) enclose the HTH TFE/IIEalpha-type domain.

This sequence belongs to the TFE family. In terms of assembly, monomer. Interaction with RNA polymerase subunits RpoF and RpoE is necessary for Tfe stimulatory transcription activity. Able to interact with Tbp and RNA polymerase in the absence of DNA promoter. Interacts both with the preinitiation and elongation complexes.

Transcription factor that plays a role in the activation of archaeal genes transcribed by RNA polymerase. Facilitates transcription initiation by enhancing TATA-box recognition by TATA-box-binding protein (Tbp), and transcription factor B (Tfb) and RNA polymerase recruitment. Not absolutely required for transcription in vitro, but particularly important in cases where Tbp or Tfb function is not optimal. It dynamically alters the nucleic acid-binding properties of RNA polymerases by stabilizing the initiation complex and destabilizing elongation complexes. Seems to translocate with the RNA polymerase following initiation and acts by binding to the non template strand of the transcription bubble in elongation complexes. The polypeptide is Transcription factor E (Pyrobaculum calidifontis (strain DSM 21063 / JCM 11548 / VA1)).